The following is a 163-amino-acid chain: NADH-quinone oxidoreductase subunit I (163 aa).

2 consecutive 4Fe-4S ferredoxin-type domains span residues 54-84 (LRRY…IESD) and 94-123 (TRYD…ETHI). [4Fe-4S] cluster is bound by residues cysteine 64, cysteine 67, cysteine 70, cysteine 74, cysteine 103, cysteine 106, cysteine 109, and cysteine 113.

The protein belongs to the complex I 23 kDa subunit family. In terms of assembly, NDH-1 is composed of 14 different subunits. Subunits NuoA, H, J, K, L, M, N constitute the membrane sector of the complex. [4Fe-4S] cluster is required as a cofactor.

It localises to the cell inner membrane. The catalysed reaction is a quinone + NADH + 5 H(+)(in) = a quinol + NAD(+) + 4 H(+)(out). Its function is as follows. NDH-1 shuttles electrons from NADH, via FMN and iron-sulfur (Fe-S) centers, to quinones in the respiratory chain. The immediate electron acceptor for the enzyme in this species is believed to be ubiquinone. Couples the redox reaction to proton translocation (for every two electrons transferred, four hydrogen ions are translocated across the cytoplasmic membrane), and thus conserves the redox energy in a proton gradient. The sequence is that of NADH-quinone oxidoreductase subunit I from Ralstonia nicotianae (strain ATCC BAA-1114 / GMI1000) (Ralstonia solanacearum).